A 350-amino-acid polypeptide reads, in one-letter code: MNMDTNDKEKKNEGIDPAKLKQLNLAVDALEKQFGKGAIMRLGDGSAVMQVQSISTGSMTLDFALGVGGLPRGRVAEIYGPESSGKTTLALHVIAEAQKEGGIAAIVDAEHAFDPSYARKLGVDINALLISQPESGEQALTIVETLVRSGAVDVVVVDSVAALVPQAELEGEMGDSVVGLQARLMSQALRKLTGAISKSSAVCIFINQLRDKIGVMYGSPETTTGGKALKFYASIRLDIRKIAQIKDGDEIVGNRTKVKVVKNKVAPPFKSAEFDILYGEGISAMGELVDLAVEFGVVKKSGSWFSFGQEKLGQGRESAKKALREDHALFQQVYIQVRELMTGTAEIING.

80–87 is a binding site for ATP; the sequence is GPESSGKT.

This sequence belongs to the RecA family.

Its subcellular location is the cytoplasm. In terms of biological role, can catalyze the hydrolysis of ATP in the presence of single-stranded DNA, the ATP-dependent uptake of single-stranded DNA by duplex DNA, and the ATP-dependent hybridization of homologous single-stranded DNAs. It interacts with LexA causing its activation and leading to its autocatalytic cleavage. The polypeptide is Protein RecA (Chlorobium limicola (strain DSM 245 / NBRC 103803 / 6330)).